A 521-amino-acid polypeptide reads, in one-letter code: Glutamyl-tRNA(Gln) amidotransferase subunit A (521 aa).

Catalysis depends on charge relay system residues lysine 79 and serine 187. Residue serine 211 is the Acyl-ester intermediate of the active site.

The protein belongs to the amidase family. GatA subfamily. Heterotrimer of A, B and C subunits.

It catalyses the reaction L-glutamyl-tRNA(Gln) + L-glutamine + ATP + H2O = L-glutaminyl-tRNA(Gln) + L-glutamate + ADP + phosphate + H(+). Its function is as follows. Allows the formation of correctly charged Gln-tRNA(Gln) through the transamidation of misacylated Glu-tRNA(Gln) in organisms which lack glutaminyl-tRNA synthetase. The reaction takes place in the presence of glutamine and ATP through an activated gamma-phospho-Glu-tRNA(Gln). This chain is Glutamyl-tRNA(Gln) amidotransferase subunit A, found in Mesorhizobium japonicum (strain LMG 29417 / CECT 9101 / MAFF 303099) (Mesorhizobium loti (strain MAFF 303099)).